We begin with the raw amino-acid sequence, 216 residues long: MRLILLGPPGAGKGTQAQRIVEKHGIPQLSTGDMLRAAVAAGTEVGKRAKAVMDAGKLVSDDIVNAIVSERIDQPDCARGFILDGFPRTLVQADATEAMLKAKGLELSAVIEIKVDDAVLADRISGRYTCANCGAGYHDENLRPKVEGVCDRCGSTHFKRRADDNRETVVERLQVYYKETSPLIGYYYAKGKLQSVDGMADIEHVTANIEAILSKL.

10–15 serves as a coordination point for ATP; sequence GAGKGT. The tract at residues 30 to 59 is NMP; it reads STGDMLRAAVAAGTEVGKRAKAVMDAGKLV. Residues T31, R36, 57–59, 85–88, and Q92 each bind AMP; these read KLV and GFPR. The segment at 126–163 is LID; that stretch reads GRYTCANCGAGYHDENLRPKVEGVCDRCGSTHFKRRAD. R127 serves as a coordination point for ATP. Residues C130, C133, C150, and C153 each coordinate Zn(2+). Residues R160 and R172 each coordinate AMP. A200 lines the ATP pocket.

This sequence belongs to the adenylate kinase family. Monomer.

It is found in the cytoplasm. It carries out the reaction AMP + ATP = 2 ADP. Its pathway is purine metabolism; AMP biosynthesis via salvage pathway; AMP from ADP: step 1/1. In terms of biological role, catalyzes the reversible transfer of the terminal phosphate group between ATP and AMP. Plays an important role in cellular energy homeostasis and in adenine nucleotide metabolism. This Rhizobium rhizogenes (strain K84 / ATCC BAA-868) (Agrobacterium radiobacter) protein is Adenylate kinase.